Here is a 170-residue protein sequence, read N- to C-terminus: Adenine phosphoribosyltransferase (170 aa).

Belongs to the purine/pyrimidine phosphoribosyltransferase family. As to quaternary structure, homodimer.

The protein resides in the cytoplasm. It carries out the reaction AMP + diphosphate = 5-phospho-alpha-D-ribose 1-diphosphate + adenine. Its pathway is purine metabolism; AMP biosynthesis via salvage pathway; AMP from adenine: step 1/1. Its function is as follows. Catalyzes a salvage reaction resulting in the formation of AMP, that is energically less costly than de novo synthesis. The chain is Adenine phosphoribosyltransferase from Oceanobacillus iheyensis (strain DSM 14371 / CIP 107618 / JCM 11309 / KCTC 3954 / HTE831).